We begin with the raw amino-acid sequence, 170 residues long: MSDEILNGAAAPADAAAGPAFTIEKIYVKDVSFESPNAPAVFNDANQPELQLNLNQKVQRLNDNAFEVVLAVTLTCTAGGKTAYVAEVQQAGVFGLVGLDPQAIDVLLGTQCPNILFPYVRTLVSDLIQAGGFPPFYLQPINFEALYAETLRQRQNEGTSLADSEPAGNA.

It belongs to the SecB family. In terms of assembly, homotetramer, a dimer of dimers. One homotetramer interacts with 1 SecA dimer.

Its subcellular location is the cytoplasm. One of the proteins required for the normal export of preproteins out of the cell cytoplasm. It is a molecular chaperone that binds to a subset of precursor proteins, maintaining them in a translocation-competent state. It also specifically binds to its receptor SecA. This chain is Protein-export protein SecB, found in Xanthomonas axonopodis pv. citri (strain 306).